The primary structure comprises 309 residues: uncharacterized protein (309 aa).

The span at 1 to 16 (MAGNSRRRGAVRKAGT) shows a compositional bias: basic residues. Positions 1-70 (MAGNSRRRGA…AKRTEETETV (70 aa)) are disordered. S-adenosyl-L-methionine is bound by residues Gly261, Ile281, and Leu290.

The protein belongs to the class IV-like SAM-binding methyltransferase superfamily. RNA methyltransferase TrmH family.

This is an uncharacterized protein from Mycobacterium avium (strain 104).